A 213-amino-acid chain; its full sequence is Adenylate kinase (213 aa).

10–15 serves as a coordination point for ATP; the sequence is GCGKGT. Residues 30–59 form an NMP region; that stretch reads STGDLMRKEISLNTRLGLKCQEYMNAGKYV. AMP-binding positions include Thr-31, Arg-36, 57-59, 83-86, and Gln-90; these read KYV and GYPR. Residues 124–161 are LID; sequence NRLVCPLCKASFNLETRKPKQEGLCDFDNTKLVKRSDD. Arg-125 provides a ligand contact to ATP. Zn(2+) is bound by residues Cys-128 and Cys-131. 134–135 contacts ATP; it reads SF. Zn(2+) contacts are provided by Cys-148 and Asp-151. AMP contacts are provided by Arg-158 and Arg-169. Asp-197 is a binding site for ATP.

This sequence belongs to the adenylate kinase family. As to quaternary structure, monomer.

The protein resides in the cytoplasm. It catalyses the reaction AMP + ATP = 2 ADP. The protein operates within purine metabolism; AMP biosynthesis via salvage pathway; AMP from ADP: step 1/1. Its function is as follows. Catalyzes the reversible transfer of the terminal phosphate group between ATP and AMP. Plays an important role in cellular energy homeostasis and in adenine nucleotide metabolism. This Mycoplasma mycoides subsp. mycoides SC (strain CCUG 32753 / NCTC 10114 / PG1) protein is Adenylate kinase.